Reading from the N-terminus, the 106-residue chain is Large ribosomal subunit protein uL24 (106 aa).

This sequence belongs to the universal ribosomal protein uL24 family. As to quaternary structure, part of the 50S ribosomal subunit.

In terms of biological role, one of two assembly initiator proteins, it binds directly to the 5'-end of the 23S rRNA, where it nucleates assembly of the 50S subunit. Functionally, one of the proteins that surrounds the polypeptide exit tunnel on the outside of the subunit. This Verminephrobacter eiseniae (strain EF01-2) protein is Large ribosomal subunit protein uL24.